A 219-amino-acid chain; its full sequence is Small ribosomal subunit protein uS3 (219 aa).

The KH type-2 domain maps to 38–106 (IRTYLKKKLY…KLNLEIKEIK (69 aa)).

It belongs to the universal ribosomal protein uS3 family. Part of the 30S ribosomal subunit. Forms a tight complex with proteins S10 and S14.

Its function is as follows. Binds the lower part of the 30S subunit head. Binds mRNA in the 70S ribosome, positioning it for translation. The polypeptide is Small ribosomal subunit protein uS3 (Lachnoclostridium phytofermentans (strain ATCC 700394 / DSM 18823 / ISDg) (Clostridium phytofermentans)).